Consider the following 324-residue polypeptide: Glyoxylate/hydroxypyruvate reductase B (324 aa).

Active-site residues include R237 and E266. H285 acts as the Proton donor in catalysis.

Belongs to the D-isomer specific 2-hydroxyacid dehydrogenase family. GhrB subfamily. As to quaternary structure, homodimer.

It localises to the cytoplasm. The catalysed reaction is glycolate + NADP(+) = glyoxylate + NADPH + H(+). It catalyses the reaction (R)-glycerate + NAD(+) = 3-hydroxypyruvate + NADH + H(+). The enzyme catalyses (R)-glycerate + NADP(+) = 3-hydroxypyruvate + NADPH + H(+). Catalyzes the NADPH-dependent reduction of glyoxylate and hydroxypyruvate into glycolate and glycerate, respectively. This is Glyoxylate/hydroxypyruvate reductase B from Escherichia coli (strain ATCC 8739 / DSM 1576 / NBRC 3972 / NCIMB 8545 / WDCM 00012 / Crooks).